Consider the following 84-residue polypeptide: Kunitz-type serine protease inhibitor B6 (84 aa).

Residues 1–24 form the signal peptide; that stretch reads MSSGGLLLLLGLLTLWAELTPISS. Residues 31–81 form the BPTI/Kunitz inhibitor domain; the sequence is CNLAPESGRCRGHLRRIYYNLESNKCKVFFYGGCGGNANNFETRDECRQTC. Disulfide bonds link Cys-31–Cys-81, Cys-40–Cys-64, and Cys-56–Cys-77.

It belongs to the venom Kunitz-type family. As to expression, expressed by the venom gland.

It localises to the secreted. Its function is as follows. Serine protease inhibitor that inhibits trypsin. The chain is Kunitz-type serine protease inhibitor B6 from Daboia siamensis (Eastern Russel's viper).